A 482-amino-acid polypeptide reads, in one-letter code: Caspase-8 (482 aa).

Residues 1 to 218 constitute a propeptide that is removed on maturation; sequence MDFHSCLYDI…DMWDSPGEQE (218 aa). DED domains follow at residues 2-80 and 100-177; these read DFHS…RVLK and AYRV…RIDD. S188 and S213 each carry phosphoserine. The active site involves H319. Y336 is modified (phosphotyrosine). C362 is an active-site residue. Positions 379 to 388 are excised as a propeptide; it reads LEQEHVLEED. S390 is subject to Phosphoserine; by CDK1.

The protein belongs to the peptidase C14A family. As to quaternary structure, heterotetramer that consists of two anti-parallel arranged heterodimers, each one formed by a 18 kDa (p18) and a 10 kDa (p10) subunit. Component of the death-induced signaling complex (DISC) composed of cell surface receptor FAS/CD95 or TNFRSF1A, adapter protein FADD and the CASP8 protease; recruitment of CASP8 to the complex is required for processing of CASP8 into the p18 and p10 subunits. Component of the AIM2 PANoptosome complex, a multiprotein complex that drives inflammatory cell death (PANoptosis). Interacts with CFLAR and PEA15. Interacts with RFFL and RNF34; negatively regulate CASP8 through proteasomal degradation. Interacts with TNFAIP8L2. Interacts with CASP8AP2. Interacts with NOL3; decreases CASP8 activity in a mitochondria localization- and phosphorylation-dependent manner and this interaction is dissociated by calcium. Interacts with UBR2. Interacts with RIPK1. Interacts with stimulated TNFRSF10B; this interaction is followed by CASP8 proteolytic cleavage and activation. Post-translationally, generation of the subunits requires association with the death-inducing signaling complex (DISC), whereas additional processing is likely due to the autocatalytic activity of the activated protease. GZMB and CASP10 can be involved in these processing events. Phosphorylation on Ser-389 during mitosis by CDK1 inhibits activation by proteolysis and prevents apoptosis. This phosphorylation occurs in cancer cell lines, as well as in primary breast tissues and lymphocytes.

It localises to the cytoplasm. The protein localises to the nucleus. It carries out the reaction Strict requirement for Asp at position P1 and has a preferred cleavage sequence of (Leu/Asp/Val)-Glu-Thr-Asp-|-(Gly/Ser/Ala).. CASP8 activity is restricted by RIPK1. Functionally, thiol protease that plays a key role in programmed cell death by acting as a molecular switch for apoptosis, necroptosis and pyroptosis, and is required to prevent tissue damage during embryonic development and adulthood. Initiator protease that induces extrinsic apoptosis by mediating cleavage and activation of effector caspases responsible for FAS/CD95-mediated and TNFRSF1A-induced cell death. Cleaves and activates effector caspases CASP3, CASP4, CASP6, CASP7, CASP9 and CASP10. Binding to the adapter molecule FADD recruits it to either receptor FAS/CD95 or TNFRSF1A. The resulting aggregate called the death-inducing signaling complex (DISC) performs CASP8 proteolytic activation. The active dimeric enzyme is then liberated from the DISC and free to activate downstream apoptotic proteases. Proteolytic fragments of the N-terminal propeptide (termed CAP3, CAP5 and CAP6) are likely retained in the DISC. In addition to extrinsic apoptosis, also acts as a negative regulator of necroptosis: acts by cleaving RIPK1 at 'Asp-325', which is crucial to inhibit RIPK1 kinase activity, limiting TNF-induced apoptosis, necroptosis and inflammatory response. Also able to initiate pyroptosis by mediating cleavage and activation of gasdermin-C and -D (GSDMC and GSDMD, respectively): gasdermin cleavage promotes release of the N-terminal moiety that binds to membranes and forms pores, triggering pyroptosis. Initiates pyroptosis following inactivation of MAP3K7/TAK1. Also acts as a regulator of innate immunity by mediating cleavage and inactivation of N4BP1 downstream of TLR3 or TLR4, thereby promoting cytokine production. May participate in the Granzyme B (GZMB) cell death pathways. Cleaves PARP1 and PARP2. This Rattus norvegicus (Rat) protein is Caspase-8.